Here is a 225-residue protein sequence, read N- to C-terminus: MSSQTLVAAGSLEEAIKEALVSSPKKRRFTQSVEMIVTLRDVDVKKPENRLNTVVALPHPAPGKLAKVAVIASGDTALKAKEAGADIVVDKDELQKIGNDKKAAKKLAKRYDFFLAQPDLMPLVGRVLGKYLGPRGKMPQPIPPNVALDALIERFRRSVRIRMKDEPQIACRIGVETQPVEHLAENARAVLAEILKKFPPPNIDRIYFKLTMGRPVKVSREVVRK.

This sequence belongs to the universal ribosomal protein uL1 family. Part of the 50S ribosomal subunit.

In terms of biological role, binds directly to 23S rRNA. Probably involved in E site tRNA release. Protein L1 is also a translational repressor protein, it controls the translation of its operon by binding to its mRNA. The sequence is that of Large ribosomal subunit protein uL1 from Thermofilum pendens (strain DSM 2475 / Hrk 5).